The sequence spans 509 residues: Cation transporter HKT2;4 (509 aa).

The Cytoplasmic portion of the chain corresponds to 1 to 32 (MPIRLHIFVSSARHAINSSALICRFIAFHLSP). A run of 2 helical transmembrane segments spans residues 33–53 (LLIHLSYFLIIDVLGFVALVV) and 96–116 (VLTLLMFLGSEMFLSFLGLVL). The Cytoplasmic portion of the chain corresponds to 117–164 (ESSKQNKHDPENRRVSSVTVCEQSHLEEAIPQTPSMNSTDIKRSCHKY). Transmembrane regions (helical) follow at residues 165–185 (LVFVVLAYMIIILVTGSLLVF) and 237–257 (GLLLLLIGQILAGSTLLPMFL). The Cytoplasmic segment spans residues 258–296 (RLVIWALRGLRLAKAEEPDFMMNNSSSVGFSHLLPNLQT). Helical transmembrane passes span 297–317 (IFLAAVEVAFVGMTVILFCCL) and 353–373 (CSLVAPAALVLFMVMMYTPSL). The Cytoplasmic segment spans residues 374–400 (TKLFSACQDHKQIGPESDDRTSKGKPF). The next 2 membrane-spanning stretches (helical) occupy residues 401–421 (LKTMAFSPLAFNTTVIMLVCI) and 476–496 (SFSGWWSEPGKLILVLAMLYG). At 497-509 (RLNSKDSTSARTR) the chain is on the cytoplasmic side.

This sequence belongs to the TrkH potassium transport family. HKT (TC 2.A.38.3) subfamily. In terms of tissue distribution, expressed in spikelets, leaf blades, leaf sheaths, internodes, nodes, the base of stems and roots.

It is found in the cell membrane. It catalyses the reaction K(+)(in) = K(+)(out). The catalysed reaction is Mg(2+)(in) = Mg(2+)(out). The enzyme catalyses Ca(2+)(in) = Ca(2+)(out). Its function is as follows. High-affinity potassium transporter that does not show potassium-sodium cotransport. Potassium transport seems to be independent of sodium. Mediates transport of the divalent cations magnesium and calcium in the absence of competing potassium ions. Selectivity for potassium is dominant over divalent cations, and magnesium and calcium transport may be small and may depend on competing potassium concentrations. This chain is Cation transporter HKT2;4, found in Oryza sativa subsp. japonica (Rice).